We begin with the raw amino-acid sequence, 638 residues long: DEAD-box ATP-dependent RNA helicase 52B (638 aa).

Composition is skewed to low complexity over residues 1–21 (MRSS…AAAA) and 40–67 (GQAA…VGQP). A disordered region spans residues 1 to 129 (MRSSWADSAA…WDRRDREPDP (129 aa)). Over residues 79 to 112 (VNGGGGGGGGSVGGSRQGFGAGGRGGGGGGGGGA) the composition is skewed to gly residues. A compositionally biased stretch (basic and acidic residues) spans 119 to 128 (GWDRRDREPD). Residues 169–197 (NTFAEIDLGDALNENIRRCKYVKPTPVQR) carry the Q motif motif. Residues 200 to 384 (IPISIAGRDL…SDFLADYIFL (185 aa)) enclose the Helicase ATP-binding domain. 213–220 (AQTGSGKT) is a binding site for ATP. The DEAD box signature appears at 328-331 (DEAD). Positions 411 to 562 (YLMDLLHAQR…EVPQWLERYA (152 aa)) constitute a Helicase C-terminal domain. The disordered stretch occupies residues 565–638 (SSFGGGGGRN…GGQGFSSAWD (74 aa)). The segment covering 567 to 583 (FGGGGGRNRRSGGGARF) has biased composition (gly residues). Residues 584 to 593 (GGRDFRRDRG) are compositionally biased toward basic and acidic residues. Gly residues predominate over residues 594-632 (SGGGGYGGGGGGYGGGGYGGGGGGGGYGGGSSYGGGGQG).

The protein belongs to the DEAD box helicase family. DDX3/DED1 subfamily.

It catalyses the reaction ATP + H2O = ADP + phosphate + H(+). This Oryza sativa subsp. japonica (Rice) protein is DEAD-box ATP-dependent RNA helicase 52B (PL10B).